The chain runs to 261 residues: Imidazole glycerol phosphate synthase subunit HisF (261 aa).

Active-site residues include Asp-11 and Asp-130.

The protein belongs to the HisA/HisF family. In terms of assembly, heterodimer of HisH and HisF.

The protein resides in the cytoplasm. The enzyme catalyses 5-[(5-phospho-1-deoxy-D-ribulos-1-ylimino)methylamino]-1-(5-phospho-beta-D-ribosyl)imidazole-4-carboxamide + L-glutamine = D-erythro-1-(imidazol-4-yl)glycerol 3-phosphate + 5-amino-1-(5-phospho-beta-D-ribosyl)imidazole-4-carboxamide + L-glutamate + H(+). Its pathway is amino-acid biosynthesis; L-histidine biosynthesis; L-histidine from 5-phospho-alpha-D-ribose 1-diphosphate: step 5/9. In terms of biological role, IGPS catalyzes the conversion of PRFAR and glutamine to IGP, AICAR and glutamate. The HisF subunit catalyzes the cyclization activity that produces IGP and AICAR from PRFAR using the ammonia provided by the HisH subunit. This is Imidazole glycerol phosphate synthase subunit HisF from Limosilactobacillus fermentum (strain NBRC 3956 / LMG 18251) (Lactobacillus fermentum).